Here is a 360-residue protein sequence, read N- to C-terminus: MKKIFALALIAPLLISCSSKKNAENAYNEAWIKDTNGFDILMGQFAHNIENIWGFNEVLIAGPKDYVKYTDQYQTRSHINFDEGTITVETIAGTEPAARLRRAIITTLLMGDDPGSIDLYSDVNDIQISREPFLYGQVVDNTGQPIRWEGRASKFADYLLQTHLKSRSNGLRIIYSVTINLVPNHLDKRAHKYIGMVRQASRKYGVDESLILAIMQTESSFNPYAVSHADALGLMQVVQHSAGKDVFRSQGKWGTPSRSYLFDPQSNIDTGTAYLAMLNNVYLGGITNPTSRRYAVITAYNGGAGSVLRVFSSDKDQAVNIINQLSPGDVYETLTNRHPSAESRRYLYKVNTAQKMYRRK.

Positions 1 to 16 are cleaved as a signal peptide; the sequence is MKKIFALALIAPLLIS. Residue C17 is the site of N-palmitoyl cysteine attachment. C17 carries S-diacylglycerol cysteine lipidation.

The protein belongs to the transglycosylase Slt family.

The protein resides in the cell outer membrane. It carries out the reaction Exolytic cleavage of the (1-&gt;4)-beta-glycosidic linkage between N-acetylmuramic acid (MurNAc) and N-acetylglucosamine (GlcNAc) residues in peptidoglycan, from either the reducing or the non-reducing ends of the peptidoglycan chains, with concomitant formation of a 1,6-anhydrobond in the MurNAc residue.. Functionally, murein-degrading enzyme. May play a role in recycling of muropeptides during cell elongation and/or cell division. The protein is Membrane-bound lytic murein transglycosylase C of Cronobacter sakazakii (strain ATCC BAA-894) (Enterobacter sakazakii).